A 1044-amino-acid chain; its full sequence is Carbamoyl phosphate synthase large chain (1044 aa).

The segment at 1–398 is carboxyphosphate synthetic domain; the sequence is MPKREDISKI…ALMKAIASLD (398 aa). Residues Arg-129, Arg-169, Gly-175, Gly-176, Arg-208, Leu-210, Glu-215, Gly-241, Val-242, His-243, Gln-284, and Glu-296 each coordinate ATP. One can recognise an ATP-grasp 1 domain in the interval 133-325; the sequence is HDFLISIGER…IARIAAKIAV (193 aa). Gln-284, Glu-296, and Asn-298 together coordinate Mg(2+). Mn(2+) is bound by residues Gln-284, Glu-296, and Asn-298. Residues 399-539 form an oligomerization domain region; that stretch reads IDLSYRLRLY…YSTYEDEDEL (141 aa). Residues 540 to 916 form a carbamoyl phosphate synthetic domain region; it reads PGISGFVAII…AIRKSILRDI (377 aa). One can recognise an ATP-grasp 2 domain in the interval 665 to 854; that stretch reads SKRLEAMGID…WVELAVSAIM (190 aa). 10 residues coordinate ATP: Arg-701, Lys-738, Leu-740, Glu-745, Gly-770, Val-771, His-772, Ser-773, Gln-813, and Glu-825. Mg(2+)-binding residues include Gln-813, Glu-825, and Asn-827. Mn(2+) is bound by residues Gln-813, Glu-825, and Asn-827. An MGS-like domain is found at 911–1044; it reads SILRDIKSVF…IDYREISSYH (134 aa). An allosteric domain region spans residues 916–1044; sequence IKSVFISVRD…IDYREISSYH (129 aa).

Belongs to the CarB family. Composed of two chains; the small (or glutamine) chain promotes the hydrolysis of glutamine to ammonia, which is used by the large (or ammonia) chain to synthesize carbamoyl phosphate. Tetramer of heterodimers (alpha,beta)4. Requires Mg(2+) as cofactor. The cofactor is Mn(2+).

The catalysed reaction is hydrogencarbonate + L-glutamine + 2 ATP + H2O = carbamoyl phosphate + L-glutamate + 2 ADP + phosphate + 2 H(+). It carries out the reaction hydrogencarbonate + NH4(+) + 2 ATP = carbamoyl phosphate + 2 ADP + phosphate + 2 H(+). Its pathway is amino-acid biosynthesis; L-arginine biosynthesis; carbamoyl phosphate from bicarbonate: step 1/1. The protein operates within pyrimidine metabolism; UMP biosynthesis via de novo pathway; (S)-dihydroorotate from bicarbonate: step 1/3. Large subunit of the glutamine-dependent carbamoyl phosphate synthetase (CPSase). CPSase catalyzes the formation of carbamoyl phosphate from the ammonia moiety of glutamine, carbonate, and phosphate donated by ATP, constituting the first step of 2 biosynthetic pathways, one leading to arginine and/or urea and the other to pyrimidine nucleotides. The large subunit (synthetase) binds the substrates ammonia (free or transferred from glutamine from the small subunit), hydrogencarbonate and ATP and carries out an ATP-coupled ligase reaction, activating hydrogencarbonate by forming carboxy phosphate which reacts with ammonia to form carbamoyl phosphate. This is Carbamoyl phosphate synthase large chain from Thermoplasma volcanium (strain ATCC 51530 / DSM 4299 / JCM 9571 / NBRC 15438 / GSS1).